The chain runs to 229 residues: Ribosome maturation factor RimM (229 aa).

The tract at residues 1–21 is disordered; that stretch reads MAGHDSGNAKRGRSPSFGVFV. Positions 148–229 constitute a PRC barrel domain; it reads ADEFYWVDLI…RVVVDWEADY (82 aa).

The protein belongs to the RimM family. Binds ribosomal protein uS19.

It is found in the cytoplasm. Its function is as follows. An accessory protein needed during the final step in the assembly of 30S ribosomal subunit, possibly for assembly of the head region. Essential for efficient processing of 16S rRNA. May be needed both before and after RbfA during the maturation of 16S rRNA. It has affinity for free ribosomal 30S subunits but not for 70S ribosomes. In Burkholderia pseudomallei (strain 1106a), this protein is Ribosome maturation factor RimM.